The following is a 260-amino-acid chain: Thiazole synthase (260 aa).

The Schiff-base intermediate with DXP role is filled by Lys-100. 1-deoxy-D-xylulose 5-phosphate-binding positions include Gly-161, 187–188, and 209–210; these read AG and NT.

The protein belongs to the ThiG family. As to quaternary structure, homotetramer. Forms heterodimers with either ThiH or ThiS.

It is found in the cytoplasm. It catalyses the reaction [ThiS sulfur-carrier protein]-C-terminal-Gly-aminoethanethioate + 2-iminoacetate + 1-deoxy-D-xylulose 5-phosphate = [ThiS sulfur-carrier protein]-C-terminal Gly-Gly + 2-[(2R,5Z)-2-carboxy-4-methylthiazol-5(2H)-ylidene]ethyl phosphate + 2 H2O + H(+). The protein operates within cofactor biosynthesis; thiamine diphosphate biosynthesis. Functionally, catalyzes the rearrangement of 1-deoxy-D-xylulose 5-phosphate (DXP) to produce the thiazole phosphate moiety of thiamine. Sulfur is provided by the thiocarboxylate moiety of the carrier protein ThiS. In vitro, sulfur can be provided by H(2)S. In Sorangium cellulosum (strain So ce56) (Polyangium cellulosum (strain So ce56)), this protein is Thiazole synthase.